Consider the following 1306-residue polypeptide: Synergin gamma (1306 aa).

Residues 113 to 153 adopt a coiled-coil conformation; it reads MQKQFAEEQQKRFEQQQKLLEEERKRRQFEEQKQKLRLLSS. Disordered stretches follow at residues 176–196 and 252–285; these read GFSRDAKMHPTPASHPKKQGP and SGPASAEAEKTSDQTLSKEESGVGVFPSQDPAQS. A compositionally biased stretch (basic and acidic residues) spans 258 to 272; it reads EAEKTSDQTLSKEES. One can recognise an EH domain in the interval 293–404; the sequence is NESLVPDAYK…TPVSQPTAMP (112 aa). The short motif at 455–459 is the DFXDF motif 1 element; sequence DFQDF. The segment at 460–494 is disordered; it reads QDASKSGSIDDSFTDFQEMPASSKTSNSQHGNSAP. A Phosphoserine modification is found at serine 471. Lysine 509 is modified (N6-acetyllysine). The segment at 514-778 is interaction with AP1G1; it reads KGISTDKPSE…ADFHSSKFSS (265 aa). A disordered region spans residues 559 to 601; that stretch reads STGTDDGFTDFKTADSVSPLEPPTKDTFPSAFASGAAQQTQTQ. A Phosphoserine modification is found at serine 576. Positions 661–673 are interaction with AP1G1, AP1G2 and GGA1; that stretch reads LADDFGEFNLFGE. The DFXDF motif 2 motif lies at 685-689; the sequence is DFADF. The interval 697 to 730 is disordered; it reads ISSEPKASDKYEALREEVSPSPLSSSTVEGAQHP. Positions 702–714 are enriched in basic and acidic residues; it reads KASDKYEALREEV. Serine 715 is subject to Phosphoserine. An N6-acetyllysine modification is found at lysine 736. 2 positions are modified to phosphoserine: serine 744 and serine 764. The DFXDF motif 3 motif lies at 767-771; that stretch reads DFADF. Phosphoserine occurs at positions 804, 844, 847, 901, 911, 927, 974, 998, 1065, 1067, 1079, and 1090. Disordered stretches follow at residues 986 to 1016 and 1065 to 1090; these read PTVDRSQETSCPSPASSVASHETPKEGADDF and SLSLGDKEISRSSPSPALEQPFRDRS. Polar residues predominate over residues 993–1005; sequence ETSCPSPASSVAS. Threonine 1092 bears the Phosphothreonine mark.

As to quaternary structure, self-associates. Interacts with GGA1 (via GAE domain). Interacts with GGA2 and GGA3. Interacts with AP1G1 (via GAE domain), a subunit of adapter protein complex AP-1. Interacts with AP1G2 (via GAE domain) a subunit of adapter protein complex AP-1. Component of the aftiphilin/p200/gamma-synergin complex, at least composed of AFTPH/aftiphilin, HEATR5B/p200a and SYNRG/gamma-synergin, which plays a role in the AP1G1/AP-1-mediated trafficking of transferrin from early to recycling endosomes. Within the complex interacts with AFTPH/aftiphilin and HEATR5B/p200a; the interactions are direct. Interacts (via EH domain) with SCAMP1.

The protein resides in the cytoplasm. Its subcellular location is the cytosol. It is found in the golgi apparatus. The protein localises to the trans-Golgi network membrane. It localises to the perinuclear region. The protein resides in the cytoplasmic vesicle. Its subcellular location is the clathrin-coated vesicle. Functionally, plays a role in endocytosis and/or membrane trafficking at the trans-Golgi network (TGN). May act by linking the adapter protein complex AP-1 to other proteins. Component of clathrin-coated vesicles. Component of the aftiphilin/p200/gamma-synergin complex, which plays roles in AP1G1/AP-1-mediated protein trafficking including the trafficking of transferrin from early to recycling endosomes, and the membrane trafficking of furin and the lysosomal enzyme cathepsin D between the trans-Golgi network (TGN) and endosomes. This is Synergin gamma (Synrg) from Mus musculus (Mouse).